We begin with the raw amino-acid sequence, 968 residues long: Glycine dehydrogenase (decarboxylating) (968 aa).

Residue K713 is modified to N6-(pyridoxal phosphate)lysine.

It belongs to the GcvP family. The glycine cleavage system is composed of four proteins: P, T, L and H. Pyridoxal 5'-phosphate serves as cofactor.

The enzyme catalyses N(6)-[(R)-lipoyl]-L-lysyl-[glycine-cleavage complex H protein] + glycine + H(+) = N(6)-[(R)-S(8)-aminomethyldihydrolipoyl]-L-lysyl-[glycine-cleavage complex H protein] + CO2. Functionally, the glycine cleavage system catalyzes the degradation of glycine. The P protein binds the alpha-amino group of glycine through its pyridoxal phosphate cofactor; CO(2) is released and the remaining methylamine moiety is then transferred to the lipoamide cofactor of the H protein. This Variovorax paradoxus (strain S110) protein is Glycine dehydrogenase (decarboxylating).